A 239-amino-acid polypeptide reads, in one-letter code: 1-(5-phosphoribosyl)-5-[(5-phosphoribosylamino)methylideneamino] imidazole-4-carboxamide isomerase (239 aa).

Asp8 functions as the Proton acceptor in the catalytic mechanism. Catalysis depends on Asp129, which acts as the Proton donor.

The protein belongs to the HisA/HisF family.

It is found in the cytoplasm. The enzyme catalyses 1-(5-phospho-beta-D-ribosyl)-5-[(5-phospho-beta-D-ribosylamino)methylideneamino]imidazole-4-carboxamide = 5-[(5-phospho-1-deoxy-D-ribulos-1-ylimino)methylamino]-1-(5-phospho-beta-D-ribosyl)imidazole-4-carboxamide. Its pathway is amino-acid biosynthesis; L-histidine biosynthesis; L-histidine from 5-phospho-alpha-D-ribose 1-diphosphate: step 4/9. The chain is 1-(5-phosphoribosyl)-5-[(5-phosphoribosylamino)methylideneamino] imidazole-4-carboxamide isomerase from Bacillus cereus (strain AH820).